Consider the following 181-residue polypeptide: Crustacyanin-C1 subunit (181 aa).

3 disulfide bridges follow: Cys-12/Cys-121, Cys-51/Cys-173, and Cys-117/Cys-150.

The protein belongs to the calycin superfamily. Lipocalin family. Oligomer; Can form dimers (beta-crustacyanin); or complexes of 16 subunits (alpha-crustacyanin). There are five types of subunits: A1, A2, A3, C1 and C2. As to expression, found in the carapace.

The protein resides in the secreted. It localises to the extracellular space. Functionally, binds the carotenoid astaxanthin (AXT) which provides the blue coloration to the carapace of the lobster. The polypeptide is Crustacyanin-C1 subunit (Homarus gammarus (European lobster)).